We begin with the raw amino-acid sequence, 320 residues long: Eukaryotic translation initiation factor 3 subunit G (320 aa).

The tract at residues 1 to 25 is disordered; sequence MPTGDFDSKPSWADQVEEEGEDDKC. A phosphoserine mark is found at Ser-8 and Ser-11. 2 positions are modified to phosphothreonine: Thr-38 and Thr-41. Phosphoserine occurs at positions 42, 189, 223, and 264. The segment at 209-234 is disordered; the sequence is KTGKYVPPSLRDGASRRGESMQPNRR. Positions 221–234 are enriched in basic and acidic residues; it reads GASRRGESMQPNRR. The 79-residue stretch at 239-317 folds into the RRM domain; the sequence is ATIRVTNLSE…LILNVEWAKP (79 aa).

Belongs to the eIF-3 subunit G family. Component of the eukaryotic translation initiation factor 3 (eIF-3) complex, which is composed of 13 subunits: EIF3A, EIF3B, EIF3C, EIF3D, EIF3E, EIF3F, EIF3G, EIF3H, EIF3I, EIF3J, EIF3K, EIF3L and EIF3M. The eIF-3 complex appears to include 3 stable modules: module A is composed of EIF3A, EIF3B, EIF3G and EIF3I; module B is composed of EIF3F, EIF3H, and EIF3M; and module C is composed of EIF3C, EIF3D, EIF3E, EIF3K and EIF3L. EIF3C of module C binds EIF3B of module A and EIF3H of module B, thereby linking the three modules. EIF3J is a labile subunit that binds to the eIF-3 complex via EIF3B. The eIF-3 complex interacts with RPS6KB1 under conditions of nutrient depletion. Mitogenic stimulation leads to binding and activation of a complex composed of FRAP1 and RAPTOR, leading to phosphorylation and release of RPS6KB1 and binding of EIF4B to eIF-3. Interacts (via C-terminus) with AIFM1 (via N-terminus). Interacts with DHX33; the interaction is independent of RNA. In terms of processing, phosphorylated. Phosphorylation is enhanced upon serum stimulation.

The protein localises to the cytoplasm. It localises to the nucleus. The protein resides in the perinuclear region. RNA-binding component of the eukaryotic translation initiation factor 3 (eIF-3) complex, which is required for several steps in the initiation of protein synthesis. The eIF-3 complex associates with the 40S ribosome and facilitates the recruitment of eIF-1, eIF-1A, eIF-2:GTP:methionyl-tRNAi and eIF-5 to form the 43S pre-initiation complex (43S PIC). The eIF-3 complex stimulates mRNA recruitment to the 43S PIC and scanning of the mRNA for AUG recognition. The eIF-3 complex is also required for disassembly and recycling of post-termination ribosomal complexes and subsequently prevents premature joining of the 40S and 60S ribosomal subunits prior to initiation. The eIF-3 complex specifically targets and initiates translation of a subset of mRNAs involved in cell proliferation, including cell cycling, differentiation and apoptosis, and uses different modes of RNA stem-loop binding to exert either translational activation or repression. This subunit can bind 18S rRNA. The protein is Eukaryotic translation initiation factor 3 subunit G of Bos taurus (Bovine).